The chain runs to 595 residues: Myb-like protein D (595 aa).

4 disordered regions span residues 1–47 (MQQQ…NGLV), 55–74 (QQYQ…DEGE), 82–266 (DESQ…NNRK), and 319–445 (VLQK…IWTQ). Over residues 19–47 (DNYNNNNSNINTNNNNSINDYENQNNGLV) the composition is skewed to low complexity. The span at 60–74 (DQNDSFDDDSMDEGE) shows a compositional bias: acidic residues. Low complexity-rich tracts occupy residues 90-212 (NNNN…ENNN) and 225-264 (NNNN…NNNN). The span at 324 to 348 (TLNRNRSRSRSRSNSRSHSRSRSRS) shows a compositional bias: basic residues. Low complexity-rich tracts occupy residues 349 to 368 (RSLS…YSRS) and 376 to 420 (NNNN…NNNN). Over residues 423–434 (RKSEDDNQDDGK) the composition is skewed to basic and acidic residues. An HTH myb-type domain is found at 435–489 (KKHRKNAIWTQEEDEKMAQLYNKYGKSWKAIHSHFDDKTREQVQSHGQYLIRIGK). The H-T-H motif DNA-binding region spans 462-485 (WKAIHSHFDDKTREQVQSHGQYLI). The segment at 494–595 (HRDGRKERRK…NSSNYVNNDN (102 aa)) is disordered. The span at 517 to 595 (QQNQQNNNNN…NSSNYVNNDN (79 aa)) shows a compositional bias: low complexity.

The protein localises to the nucleus. This Dictyostelium discoideum (Social amoeba) protein is Myb-like protein D (mybD).